The following is an 860-amino-acid chain: Probable inorganic carbon transporter subunit DabA (860 aa).

The disordered stretch occupies residues 1–32 (MTTTSLGADAAHTHAMVPSAIPPEGSDAAGPD). Cys369, Asp371, His551, and Cys566 together coordinate Zn(2+).

This sequence belongs to the inorganic carbon transporter (TC 9.A.2) DabA family. Forms a complex with DabB. Zn(2+) is required as a cofactor.

The protein resides in the cell inner membrane. Part of an energy-coupled inorganic carbon pump. The protein is Probable inorganic carbon transporter subunit DabA of Ralstonia pickettii (strain 12D).